A 238-amino-acid polypeptide reads, in one-letter code: MRFKNRFQRFMNHRAPANGRYKPTCYEHAANCYTHAFLIVPAIVGSALLHRLSDDCWEKITAWIYGMGLCALFIVSTVFHIVSWKKSHLRTVEHCFHMCDRMVIYFFIAASYAPWLNLRELGPLASHMRWFIWLMAAGGTIYVFLYHEKYKVVELFFYLTMGFSPALVVTSMNNTDGLQELACGGLIYCLGVVFFKSDGIIPFAHAIWHLFVATAAAVHYYAIWKYLYRSPTDFMRHL.

Over 1–28 (MRFKNRFQRFMNHRAPANGRYKPTCYEH) the chain is Cytoplasmic. Residues 29 to 49 (AANCYTHAFLIVPAIVGSALL) traverse the membrane as a helical segment. Topologically, residues 50–61 (HRLSDDCWEKIT) are lumenal. The helical transmembrane segment at 62 to 82 (AWIYGMGLCALFIVSTVFHIV) threads the bilayer. At 83–101 (SWKKSHLRTVEHCFHMCDR) the chain is on the cytoplasmic side. Residues 102–122 (MVIYFFIAASYAPWLNLRELG) traverse the membrane as a helical segment. The Lumenal segment spans residues 123–124 (PL). A helical transmembrane segment spans residues 125 to 145 (ASHMRWFIWLMAAGGTIYVFL). The Cytoplasmic portion of the chain corresponds to 146-151 (YHEKYK). The helical transmembrane segment at 152–172 (VVELFFYLTMGFSPALVVTSM) threads the bilayer. Residues 173–174 (NN) are Lumenal-facing. The chain crosses the membrane as a helical span at residues 175-195 (TDGLQELACGGLIYCLGVVFF). Residues 196–198 (KSD) lie on the Cytoplasmic side of the membrane. The helical transmembrane segment at 199-219 (GIIPFAHAIWHLFVATAAAVH) threads the bilayer. The Lumenal segment spans residues 220–238 (YYAIWKYLYRSPTDFMRHL).

Belongs to the ADIPOR family. In terms of tissue distribution, exhibits relatively ubiquitous expression with preferential expression in mature (in vitro differentiated) macrophages.

It localises to the late endosome membrane. It is found in the lysosome membrane. In terms of biological role, involved in the dynamics of lysosomal membranes associated with microglial activation following brain lesion. The sequence is that of Monocyte to macrophage differentiation factor from Homo sapiens (Human).